The following is a 235-amino-acid chain: Endonuclease V (235 aa).

Mg(2+)-binding residues include D45 and D115.

Belongs to the endonuclease V family. Mg(2+) is required as a cofactor.

It localises to the cytoplasm. It carries out the reaction Endonucleolytic cleavage at apurinic or apyrimidinic sites to products with a 5'-phosphate.. DNA repair enzyme involved in the repair of deaminated bases. Selectively cleaves double-stranded DNA at the second phosphodiester bond 3' to a deoxyinosine leaving behind the intact lesion on the nicked DNA. The chain is Endonuclease V from Bacillus thuringiensis subsp. konkukian (strain 97-27).